Reading from the N-terminus, the 311-residue chain is MKRPTSSSRKSKKQGEDLAFSEEGSLPAVTMEQKDEAEMEEVDEEEEEEVDEDMAGGHAAQSPSPSCGLGEKKRRLALEQVRALERSFDTDNKLDPDRKARIARDLGLQPRQVAVWFQNRRARWKTKQLERDFAALRARHDALRADCDALRRDKDALAAEIRELREKLPTKPADTAASVKVEAGNDAAAGAAAATVCKDGSSDDSDSSVVFNDEASPYSGAAFIGFGPSFLVDDASAATVGCSSSLPALESKWHGPYSDDSCKGGVYGFTEEWLAACSGEMAGNDAAGFFSDEHASNLNFGWCASGNEGWE.

A disordered region spans residues 1-74; that stretch reads MKRPTSSSRK…PSCGLGEKKR (74 aa). Acidic residues predominate over residues 35-54; sequence DEAEMEEVDEEEEEEVDEDM. Residues 69-128 constitute a DNA-binding region (homeobox); sequence LGEKKRRLALEQVRALERSFDTDNKLDPDRKARIARDLGLQPRQVAVWFQNRRARWKTKQ. The interval 127-171 is leucine-zipper; sequence KQLERDFAALRARHDALRADCDALRRDKDALAAEIRELREKLPTK.

It belongs to the HD-ZIP homeobox family. Class I subfamily. As to expression, expressed in seedlings, roots, stems, leaf sheaths and blades and panicles.

The protein resides in the nucleus. Its function is as follows. Probable transcription factor. This chain is Homeobox-leucine zipper protein HOX13 (HOX13), found in Oryza sativa subsp. japonica (Rice).